A 117-amino-acid chain; its full sequence is Large ribosomal subunit protein bL20 (117 aa).

This sequence belongs to the bacterial ribosomal protein bL20 family.

Functionally, binds directly to 23S ribosomal RNA and is necessary for the in vitro assembly process of the 50S ribosomal subunit. It is not involved in the protein synthesizing functions of that subunit. This Oleidesulfovibrio alaskensis (strain ATCC BAA-1058 / DSM 17464 / G20) (Desulfovibrio alaskensis) protein is Large ribosomal subunit protein bL20.